The chain runs to 465 residues: Na(+)-translocating NADH-quinone reductase subunit A (465 aa).

This sequence belongs to the NqrA family. Composed of six subunits; NqrA, NqrB, NqrC, NqrD, NqrE and NqrF.

It carries out the reaction a ubiquinone + n Na(+)(in) + NADH + H(+) = a ubiquinol + n Na(+)(out) + NAD(+). NQR complex catalyzes the reduction of ubiquinone-1 to ubiquinol by two successive reactions, coupled with the transport of Na(+) ions from the cytoplasm to the periplasm. NqrA to NqrE are probably involved in the second step, the conversion of ubisemiquinone to ubiquinol. This Chlamydia trachomatis serovar A (strain ATCC VR-571B / DSM 19440 / HAR-13) protein is Na(+)-translocating NADH-quinone reductase subunit A.